Consider the following 70-residue polypeptide: Small ribosomal subunit protein bS21C (70 aa).

The disordered stretch occupies residues 38–70 (YEKPTTERKRKKAAAVARLRKQVRRSMPPKKKY). The span at 45–70 (RKRKKAAAVARLRKQVRRSMPPKKKY) shows a compositional bias: basic residues.

It belongs to the bacterial ribosomal protein bS21 family.

The sequence is that of Small ribosomal subunit protein bS21C from Burkholderia thailandensis (strain ATCC 700388 / DSM 13276 / CCUG 48851 / CIP 106301 / E264).